The following is a 74-amino-acid chain: UPF0270 protein NT01EI_3666 (74 aa).

This sequence belongs to the UPF0270 family.

This Edwardsiella ictaluri (strain 93-146) protein is UPF0270 protein NT01EI_3666.